The primary structure comprises 167 residues: Large ribosomal subunit protein uL10 (167 aa).

Belongs to the universal ribosomal protein uL10 family. As to quaternary structure, part of the ribosomal stalk of the 50S ribosomal subunit. The N-terminus interacts with L11 and the large rRNA to form the base of the stalk. The C-terminus forms an elongated spine to which L12 dimers bind in a sequential fashion forming a multimeric L10(L12)X complex.

Forms part of the ribosomal stalk, playing a central role in the interaction of the ribosome with GTP-bound translation factors. This is Large ribosomal subunit protein uL10 from Paraburkholderia phytofirmans (strain DSM 17436 / LMG 22146 / PsJN) (Burkholderia phytofirmans).